A 182-amino-acid chain; its full sequence is Ribosome-recycling factor (182 aa).

This sequence belongs to the RRF family.

The protein resides in the cytoplasm. Responsible for the release of ribosomes from messenger RNA at the termination of protein biosynthesis. May increase the efficiency of translation by recycling ribosomes from one round of translation to another. The polypeptide is Ribosome-recycling factor (Synechococcus sp. (strain JA-2-3B'a(2-13)) (Cyanobacteria bacterium Yellowstone B-Prime)).